The chain runs to 504 residues: Maturase K (504 aa).

This sequence belongs to the intron maturase 2 family. MatK subfamily.

Its subcellular location is the plastid. It is found in the chloroplast. Functionally, usually encoded in the trnK tRNA gene intron. Probably assists in splicing its own and other chloroplast group II introns. The sequence is that of Maturase K from Quercus lyrata (Overcup oak).